A 347-amino-acid polypeptide reads, in one-letter code: Probable zinc transporter 8 (347 aa).

An N-terminal signal peptide occupies residues 1–27; that stretch reads MATTTQHMNQIFLVLLLISFAISPAIS. The Extracellular portion of the chain corresponds to 28-51; sequence TVPKECETDSTDSCIDKTKALPLK. Residues 52 to 72 form a helical membrane-spanning segment; sequence IVAIVAILVTSMIGVAAPLFS. Over 73-83 the chain is Cytoplasmic; that stretch reads RYVTFLHPDGK. A helical membrane pass occupies residues 84 to 104; sequence IFMIIKCFASGIILGTGFMHV. At 105-124 the chain is on the extracellular side; sequence LPDSFEMLSSPCLEDNPWHK. A helical transmembrane segment spans residues 125–145; that stretch reads FPFTGFVAMLSGLVTLAIDSI. At 146-192 the chain is on the cytoplasmic side; that stretch reads ATSLYTKKAVADDSEERTTPMIIQIDHLPLTTKERSSTCSKQLLRYR. A helical membrane pass occupies residues 193–213; the sequence is VIATVLELGIIVHSVVIGLSL. The Extracellular portion of the chain corresponds to 214-224; that stretch reads GATNDTCTIKG. The chain crosses the membrane as a helical span at residues 225-245; it reads LIAALCFHQMFEGMGLGGCIL. Residues 246–254 are Cytoplasmic-facing; it reads QAEYTNVKK. A helical transmembrane segment spans residues 255–275; it reads FVMAFFFAVTTPSGIALGIAL. Residues 276 to 286 are Extracellular-facing; sequence SSVYKDNSPTA. The chain crosses the membrane as a helical span at residues 287-307; it reads LITVGLLNACSAGLLIYMALV. Residues 308-326 lie on the Cytoplasmic side of the membrane; it reads DLLAAEFMGSMLQRSVKLQ. Residues 327 to 347 traverse the membrane as a helical segment; sequence LNCFGAALLGCGGMSVLAKWA.

Belongs to the ZIP transporter (TC 2.A.5) family.

Its subcellular location is the cell membrane. Probably mediates zinc uptake from the rhizosphere. The polypeptide is Probable zinc transporter 8 (ZIP8) (Arabidopsis thaliana (Mouse-ear cress)).